The sequence spans 293 residues: Probable metal transport system membrane protein TC_0698 (293 aa).

Transmembrane regions (helical) follow at residues 18–38 (SLLA…YIVV), 41–61 (IVSI…IALW), 68–88 (LPIS…ICIG), 101–121 (IISM…SKLP), 142–162 (DLYF…ICHT), 186–206 (FLLL…MGVI), and 242–262 (FLGI…IAIL).

Belongs to the ABC-3 integral membrane protein family.

The protein resides in the cell inner membrane. In terms of biological role, part of an ATP-driven transport system TC_0696/TC_0697/TC_0698 for a metal. This is Probable metal transport system membrane protein TC_0698 from Chlamydia muridarum (strain MoPn / Nigg).